A 687-amino-acid chain; its full sequence is Protein-glutamine gamma-glutamyltransferase 2 (687 aa).

A2 is modified (N-acetylalanine). Residue S60 is modified to Phosphoserine. 2 disulfides stabilise this stretch: C230–C370 and C370–C371. Residues C277, H335, and D358 contribute to the active site. N398, D400, E437, E447, and E452 together coordinate Ca(2+). K468 is modified (N6-acetyllysine). Residue 476–483 (RIRVGQSM) coordinates GTP. E539 serves as a coordination point for Ca(2+). Position 580–583 (580–583 (RDLY)) interacts with GTP. Q633 participates in a covalent cross-link: Isoglutamyl lysine isopeptide (Gln-Lys) (interchain with K-?).

It belongs to the transglutaminase superfamily. Transglutaminase family. As to quaternary structure, monomer. Interacts with phospholipase C; promoting alpha-1 adrenergic receptor signaling. Interacts with PLCD1. Homooligomer. Ca(2+) is required as a cofactor. In terms of processing, disulfide bond formation inactivates the calcium-dependent acyltransferase activity. Cys-370 can form disulfide bonds with both Cys-230 and Cys-371: formation of a disulfide bond between Cys-230 and Cys-370 facilitates formation of the disulfide between Cys-370 and Cys-371, which promotes inactivation of the acyltransferase activity. May also form interchain disulfids between Cys-230 and Cys-370. Ca(2+) protects against disulfide bond formation and inactivation. Post-translationally, auto-transglutaminated: Forms covalent cross-links mediated by transglutaminase between Gln-633 and the epsilon-amino group of a lysine residue of itself or HMGB1, forming homopolymers and heteropolymers, respectively. S-nitrosylated, leading to inactivation of the acyltransferase activity.

Its subcellular location is the cytoplasm. It is found in the cytosol. The protein localises to the nucleus. The protein resides in the chromosome. It localises to the secreted. Its subcellular location is the extracellular space. It is found in the extracellular matrix. The protein localises to the cell membrane. The protein resides in the mitochondrion. It localises to the perinuclear region. It carries out the reaction L-glutaminyl-[protein] + L-lysyl-[protein] = [protein]-L-lysyl-N(6)-5-L-glutamyl-[protein] + NH4(+). It catalyses the reaction L-glutaminyl-[protein] + serotonin = 5-serotonyl-L-glutamyl-[protein] + NH4(+). The catalysed reaction is L-glutaminyl-[protein] + dopamine = 5-dopaminyl-L-glutamyl-[protein] + NH4(+). The enzyme catalyses L-glutaminyl-[protein] + histamine = 5-histaminyl-L-glutamyl-[protein] + NH4(+). It carries out the reaction L-glutaminyl-[protein] + (R)-noradrenaline = 5-(R)-noradrenalinyl-L-glutamyl-[protein] + NH4(+). It catalyses the reaction L-glutaminyl-[protein] + H2O = L-glutamyl-[protein] + NH4(+). Its activity is regulated as follows. Acyltransferase activity is regulated by the binding of GTP and Ca(2+): inactivated by GTP, which stabilizes its closed structure, thereby obstructing the accessibility of substrates to the active sites. In contrast, Ca(2+) acts as a cofactor by inducing conformational change to the active open form. In absence of Ca(2+), Mg(2+) may bind Ca(2+)-binding sites, promoting GTP-binding and subsequent inhibition of the acyltransferase activity. Extracellularly reduced and activated by CLIC3. Specifically inhibited by compound VA4 ((S)-Benzyl (6-Acrylamido-1-(4-((5-(dimethylamino)naphthalen-1-yl)sulfonyl)piperazin-1-yl)-1-oxohexan-2-yl)carbamate), which specifically abolishes both the transamidation and GTP-binding activities. In terms of biological role, calcium-dependent acyltransferase that catalyzes the formation of covalent bonds between peptide-bound glutamine and various primary amines, such as gamma-amino group of peptide-bound lysine, or mono- and polyamines, thereby producing cross-linked or aminated proteins, respectively. Involved in many biological processes, such as bone development, angiogenesis, wound healing, cellular differentiation, chromatin modification and apoptosis. Acts as a protein-glutamine gamma-glutamyltransferase by mediating the cross-linking of proteins, such as ACO2, HSPB6, FN1, HMGB1, RAP1GDS1, SLC25A4/ANT1, SPP1 and WDR54. Under physiological conditions, the protein cross-linking activity is inhibited by GTP; inhibition is relieved by Ca(2+) in response to various stresses. When secreted, catalyzes cross-linking of proteins of the extracellular matrix, such as FN1 and SPP1 resulting in the formation of scaffolds. Plays a key role during apoptosis, both by (1) promoting the cross-linking of cytoskeletal proteins resulting in condensation of the cytoplasm, and by (2) mediating cross-linking proteins of the extracellular matrix, resulting in the irreversible formation of scaffolds that stabilize the integrity of the dying cells before their clearance by phagocytosis, thereby preventing the leakage of harmful intracellular components. In addition to protein cross-linking, can use different monoamine substrates to catalyze a vast array of protein post-translational modifications: mediates aminylation of serotonin, dopamine, noradrenaline or histamine into glutamine residues of target proteins to generate protein serotonylation, dopaminylation, noradrenalinylation or histaminylation, respectively. Mediates protein serotonylation of small GTPases during activation and aggregation of platelets, leading to constitutive activation of these GTPases. Plays a key role in chromatin organization by mediating serotonylation and dopaminylation of histone H3. Catalyzes serotonylation of 'Gln-5' of histone H3 (H3Q5ser) during serotonergic neuron differentiation, thereby facilitating transcription. Acts as a mediator of neurotransmission-independent role of nuclear dopamine in ventral tegmental area (VTA) neurons: catalyzes dopaminylation of 'Gln-5' of histone H3 (H3Q5dop), thereby regulating relapse-related transcriptional plasticity in the reward system. Regulates vein remodeling by mediating serotonylation and subsequent inactivation of ATP2A2/SERCA2. Also acts as a protein deamidase by mediating the side chain deamidation of specific glutamine residues of proteins to glutamate. Catalyzes specific deamidation of protein gliadin, a component of wheat gluten in the diet. May also act as an isopeptidase cleaving the previously formed cross-links. Also able to participate in signaling pathways independently of its acyltransferase activity: acts as a signal transducer in alpha-1 adrenergic receptor-mediated stimulation of phospholipase C-delta (PLCD) activity and is required for coupling alpha-1 adrenergic agonists to the stimulation of phosphoinositide lipid metabolism. Functionally, has cytotoxic activity: is able to induce apoptosis independently of its acyltransferase activity. The chain is Protein-glutamine gamma-glutamyltransferase 2 from Homo sapiens (Human).